A 522-amino-acid chain; its full sequence is Gypsy retrotransposon integrase-like protein 1 (522 aa).

In terms of domain architecture, Integrase catalytic spans 135–292; sequence KVENPWSLVT…TPYFQMFSRN (158 aa).

This Macaca fascicularis (Crab-eating macaque) protein is Gypsy retrotransposon integrase-like protein 1 (GIN1).